The primary structure comprises 392 residues: CCA-adding enzyme (392 aa).

The ATP site is built by serine 45 and lysine 48. CTP-binding residues include serine 45 and lysine 48. Positions 55, 57, and 106 each coordinate Mg(2+). Positions 129, 148, and 157 each coordinate ATP. CTP contacts are provided by histidine 129, lysine 148, and tyrosine 157.

This sequence belongs to the tRNA nucleotidyltransferase/poly(A) polymerase family. Archaeal CCA-adding enzyme subfamily. As to quaternary structure, homodimer. The cofactor is Mg(2+).

It carries out the reaction a tRNA precursor + 2 CTP + ATP = a tRNA with a 3' CCA end + 3 diphosphate. The enzyme catalyses a tRNA with a 3' CCA end + 2 CTP + ATP = a tRNA with a 3' CCACCA end + 3 diphosphate. In terms of biological role, catalyzes the addition and repair of the essential 3'-terminal CCA sequence in tRNAs without using a nucleic acid template. Adds these three nucleotides in the order of C, C, and A to the tRNA nucleotide-73, using CTP and ATP as substrates and producing inorganic pyrophosphate. tRNA 3'-terminal CCA addition is required both for tRNA processing and repair. Also involved in tRNA surveillance by mediating tandem CCA addition to generate a CCACCA at the 3' terminus of unstable tRNAs. While stable tRNAs receive only 3'-terminal CCA, unstable tRNAs are marked with CCACCA and rapidly degraded. In Nanoarchaeum equitans (strain Kin4-M), this protein is CCA-adding enzyme.